A 684-amino-acid polypeptide reads, in one-letter code: Putative glucan endo-1,3-beta-glucosidase btgC (684 aa).

Over residues 1 to 10 (MAGVNRSFSY) the composition is skewed to polar residues. Disordered regions lie at residues 1-38 (MAGVNRSFSYSRGDDALLRDDEREISPLRSAEDGLYST), 124-143 (AERDFNTTGSDNPYIPAPPD), and 157-182 (DSYSSHTGLGAGAPFAEHSTPGTTPS). Residues 1–302 (MAGVNRSFSY…HIIGGGSRKR (302 aa)) are Cytoplasmic-facing. The span at 12–32 (RGDDALLRDDEREISPLRSAE) shows a compositional bias: basic and acidic residues. Residues 303 to 323 (GWIVGLILAAVIVAAIVGGAV) form a helical; Signal-anchor for type II membrane protein membrane-spanning segment. Residues 324-684 (GGILGHQEHD…IPDCGGKTIT (361 aa)) are Extracellular-facing. The disordered stretch occupies residues 330 to 358 (QEHDGDTSSSSSSSSSSGTGSGGSDKGDG). The span at 336–347 (TSSSSSSSSSSG) shows a compositional bias: low complexity. 4 N-linked (GlcNAc...) asparagine glycosylation sites follow: N404, N427, N455, and N474. E487 functions as the Proton donor in the catalytic mechanism. E586 (nucleophile) is an active-site residue. N631 carries an N-linked (GlcNAc...) asparagine glycan.

It belongs to the glycosyl hydrolase 17 family.

The protein localises to the cell membrane. It catalyses the reaction Hydrolysis of (1-&gt;3)-beta-D-glucosidic linkages in (1-&gt;3)-beta-D-glucans.. Its function is as follows. Glucanases play a role in cell expansion during growth, in cell-cell fusion during mating, and in spore release during sporulation. This enzyme may be involved in beta-glucan degradation. Active on laminarin and lichenan. The polypeptide is Putative glucan endo-1,3-beta-glucosidase btgC (btgC) (Aspergillus niger (strain ATCC MYA-4892 / CBS 513.88 / FGSC A1513)).